The primary structure comprises 492 residues: N-succinylglutamate 5-semialdehyde dehydrogenase (492 aa).

220–225 (GSANTG) contributes to the NAD(+) binding site. Active-site residues include Glu-243 and Cys-277.

Belongs to the aldehyde dehydrogenase family. AstD subfamily.

The catalysed reaction is N-succinyl-L-glutamate 5-semialdehyde + NAD(+) + H2O = N-succinyl-L-glutamate + NADH + 2 H(+). Its pathway is amino-acid degradation; L-arginine degradation via AST pathway; L-glutamate and succinate from L-arginine: step 4/5. Catalyzes the NAD-dependent reduction of succinylglutamate semialdehyde into succinylglutamate. The protein is N-succinylglutamate 5-semialdehyde dehydrogenase of Escherichia coli O9:H4 (strain HS).